A 688-amino-acid polypeptide reads, in one-letter code: Polyphosphate kinase (688 aa).

Asn-45 is a binding site for ATP. Mg(2+)-binding residues include Arg-375 and Arg-405. Residues 430-464 (PGLKIHAKLFLISRKENGEVVRYAHIGTGNFNEKT) enclose the PLD phosphodiesterase domain. His-435 functions as the Phosphohistidine intermediate in the catalytic mechanism. ATP-binding residues include Tyr-468, Arg-564, and His-592.

It belongs to the polyphosphate kinase 1 (PPK1) family. Mg(2+) is required as a cofactor. In terms of processing, an intermediate of this reaction is the autophosphorylated ppk in which a phosphate is covalently linked to a histidine residue through a N-P bond.

It carries out the reaction [phosphate](n) + ATP = [phosphate](n+1) + ADP. Catalyzes the reversible transfer of the terminal phosphate of ATP to form a long-chain polyphosphate (polyP). The sequence is that of Polyphosphate kinase from Escherichia coli O157:H7.